We begin with the raw amino-acid sequence, 84 residues long: Hepcidin (84 aa).

The first 24 residues, 1–24 (MALSSQIWAACLLLLLLLASLTSG), serve as a signal peptide directing secretion. The propeptide occupies 25–54 (SVFPQQTGQLAELQPQDRAGARASWMPMFQ). 4 cysteine pairs are disulfide-bonded: Cys-66–Cys-82, Cys-69–Cys-72, Cys-70–Cys-78, and Cys-73–Cys-81.

This sequence belongs to the hepcidin family. Interacts with SLC40A1; this interaction promotes SLC40A1 rapid ubiquitination. Highest expression in liver and to a lesser extent in heart and brain. Low levels in lung, tonsils, salivary gland, trachea, prostate gland, adrenal gland and thyroid gland. Secreted into the urine and blood. Expressed by hepatocytes.

The protein resides in the secreted. Its function is as follows. Liver-produced hormone that constitutes the main circulating regulator of iron absorption and distribution across tissues. Acts by promoting endocytosis and degradation of ferroportin/SLC40A1, leading to the retention of iron in iron-exporting cells and decreased flow of iron into plasma. Controls the major flows of iron into plasma: absorption of dietary iron in the intestine, recycling of iron by macrophages, which phagocytose old erythrocytes and other cells, and mobilization of stored iron from hepatocytes. In terms of biological role, has strong antimicrobial activity against E.coli ML35P N.cinerea and weaker against S.epidermidis, S.aureus and group b streptococcus bacteria. Active against the fungus C.albicans. No activity against P.aeruginosa. In Homo sapiens (Human), this protein is Hepcidin.